Reading from the N-terminus, the 204-residue chain is MGAYKYMQELWRKKQSDVMRFLLRVRCWQYRQLSALHRAPRATRPDKARRLGYKAKQGYVIYRVRVRRGGRKRPVPKGATYGKPVHHGVNQLKFARSLQSIAEERAGRHCGGLRVLNSYWVGEDSTYKFFEVILIDTFHKAIRRNPDMQWITKAVHKHREMRGLTSAGKKSRGLGKGHKFHLTIGGSRRAAWRRRNTLQLHRYR.

The protein belongs to the eukaryotic ribosomal protein eL15 family. As to quaternary structure, component of the large ribosomal subunit.

The protein localises to the cytoplasm. In terms of biological role, component of the large ribosomal subunit. The ribosome is a large ribonucleoprotein complex responsible for the synthesis of proteins in the cell. This is Large ribosomal subunit protein eL15 (rpl15) from Silurus asotus (Amur catfish).